A 95-amino-acid polypeptide reads, in one-letter code: PIK3R3 upstream open reading frame protein (95 aa).

Residues 1–27 form a disordered region; the sequence is MGPSRLVRGPRPQGMRSPYRRPGMGWP.

This Homo sapiens (Human) protein is PIK3R3 upstream open reading frame protein.